Reading from the N-terminus, the 227-residue chain is Paired immunoglobulin-like type 2 receptor beta (227 aa).

Residues 1-19 (MGRPLLLPLLLLLQPPAFL) form the signal peptide. Residues 20-191 (QPGGSTGSGP…WHLSLDTAIR (172 aa)) are Extracellular-facing. Residues 21 to 143 (PGGSTGSGPS…SGRQQLQSIK (123 aa)) form the Ig-like V-type domain. Asn-100 carries an N-linked (GlcNAc...) asparagine glycan. A helical transmembrane segment spans residues 192-212 (VALAVAVLKTVILGLLCLLLL). Residues 213–227 (WWRRRKGSRAPSSDF) are Cytoplasmic-facing.

It localises to the membrane. Its function is as follows. Paired receptors consist of highly related activating and inhibitory receptors and are widely involved in the regulation of the immune system. PILRB is thought to act as a cellular signaling activating receptor that associates with ITAM-bearing adapter molecules on the cell surface. This is Paired immunoglobulin-like type 2 receptor beta (PILRB) from Homo sapiens (Human).